The following is a 376-amino-acid chain: Chaperone protein DnaJ (376 aa).

The J domain maps to 5–70 (DFYEVLGVER…SKRAAYDQYG (66 aa)). Residues 135–213 (GTTVTIRVPT…CHGQGRVEEQ (79 aa)) form a CR-type zinc finger. Residues Cys148, Cys151, Cys165, Cys168, Cys187, Cys190, Cys201, and Cys204 each contribute to the Zn(2+) site. CXXCXGXG motif repeat units lie at residues 148 to 155 (CKTCDGSG), 165 to 172 (CTTCGGIG), 187 to 194 (CPRCHGSG), and 201 to 208 (CGSCHGQG).

This sequence belongs to the DnaJ family. Homodimer. Requires Zn(2+) as cofactor.

It is found in the cytoplasm. Its function is as follows. Participates actively in the response to hyperosmotic and heat shock by preventing the aggregation of stress-denatured proteins and by disaggregating proteins, also in an autonomous, DnaK-independent fashion. Unfolded proteins bind initially to DnaJ; upon interaction with the DnaJ-bound protein, DnaK hydrolyzes its bound ATP, resulting in the formation of a stable complex. GrpE releases ADP from DnaK; ATP binding to DnaK triggers the release of the substrate protein, thus completing the reaction cycle. Several rounds of ATP-dependent interactions between DnaJ, DnaK and GrpE are required for fully efficient folding. Also involved, together with DnaK and GrpE, in the DNA replication of plasmids through activation of initiation proteins. The sequence is that of Chaperone protein DnaJ from Stutzerimonas stutzeri (Pseudomonas stutzeri).